Here is a 259-residue protein sequence, read N- to C-terminus: MKRISLIALVTLMSGCTMLEPIETPEVVNATTVVDAVEGDKSKDESSGIVDTLRGRSDPVAGDPAWAPIHPKQQPEHYAAETGSLFSVNHLSNLYDDSKPRGVGDIITVTLDEKTNASKSANADLSKSNDSSMDPLEVGGQELKIDGKYNFSYNLTNSNNFTGDASAKQSNSISGYITVEVIEVLANGNLVIRGEKWLTLNTGDEYIRLSGTIRPDDISFDNTIASNRVSNARIQYSGTGTQQDMQEPGFLARFFNVSL.

Residues 1-15 form the signal peptide; sequence MKRISLIALVTLMSG. A lipid anchor (N-palmitoyl cysteine) is attached at cysteine 16. Cysteine 16 is lipidated: S-diacylglycerol cysteine.

The protein belongs to the FlgH family. As to quaternary structure, the basal body constitutes a major portion of the flagellar organelle and consists of four rings (L,P,S, and M) mounted on a central rod.

The protein resides in the cell outer membrane. It localises to the bacterial flagellum basal body. Functionally, assembles around the rod to form the L-ring and probably protects the motor/basal body from shearing forces during rotation. This is Flagellar L-ring protein from Vibrio vulnificus (strain YJ016).